Consider the following 1102-residue polypeptide: Protein MMS22-like (1102 aa).

Belongs to the MMS22 family. MMS22L subfamily.

The protein localises to the nucleus. It localises to the chromosome. Involved in recombination-dependent repair of stalled or collapsed replication forks. The protein is Protein MMS22-like of Drosophila melanogaster (Fruit fly).